The sequence spans 590 residues: Protein phosphatase PP2A regulatory subunit A (590 aa).

HEAT repeat units lie at residues proline 12 to glutamate 50, leucine 89 to tyrosine 127, phenylalanine 206 to histidine 244, leucine 246 to glutamate 284, leucine 285 to glutamate 323, isoleucine 324 to tyrosine 362, leucine 363 to serine 401, leucine 402 to lysine 440, isoleucine 480 to glutamine 518, isoleucine 519 to alanine 551, and isoleucine 562 to aspartate 590.

This sequence belongs to the phosphatase 2A regulatory subunit A family. As to quaternary structure, PP2A exists in several trimeric forms, all of which consist of a core composed of a catalytic subunit associated with a 65 kDa (PR65) (Subunit A) and a 55 kDa (PR55) (Subunit B) regulatory subunit.

Its function is as follows. Phosphatase 2A affects a variety of biological processes in the cell such as transcription, cell cycle progression and cellular morphogenesis, and provides an initial identification of critical substrates for this phosphatase. The regulatory subunit may direct the catalytic subunit to distinct, albeit overlapping, subsets of substrates. The chain is Protein phosphatase PP2A regulatory subunit A (paa1) from Schizosaccharomyces pombe (strain 972 / ATCC 24843) (Fission yeast).